The sequence spans 241 residues: Uridylate kinase (241 aa).

12–15 (KLSG) provides a ligand contact to ATP. The tract at residues 20 to 25 (GDKGVG) is involved in allosteric activation by GTP. A UMP-binding site is contributed by Gly54. Gly55 and Arg59 together coordinate ATP. UMP is bound by residues Asp74 and 135 to 142 (IGSPYFST). The ATP site is built by Asn163, Tyr169, and Asp172.

The protein belongs to the UMP kinase family. Homohexamer.

The protein resides in the cytoplasm. The catalysed reaction is UMP + ATP = UDP + ADP. It participates in pyrimidine metabolism; CTP biosynthesis via de novo pathway; UDP from UMP (UMPK route): step 1/1. With respect to regulation, allosterically activated by GTP. Inhibited by UTP. Catalyzes the reversible phosphorylation of UMP to UDP. The protein is Uridylate kinase of Streptococcus gordonii (strain Challis / ATCC 35105 / BCRC 15272 / CH1 / DL1 / V288).